The chain runs to 278 residues: MTVLHSVDFFPSGNASVAIEPRLPQADFPEHHHDFHEIVIVEHGTGIHVFNGQPYTITGGTVCFVRDHDRHLYEHTDNLCLTNVLYRSPDRFQFLAGLNQLLPQELDGQYPSHWRVNHSVLQQVRQLVAQMEQQEGENDLPSTASREILFMQLLLLLRKSSLQENLENSASRLNLLLAWLEDHFADEVNWDAVADQFSLSLRTLHRQLKQQTGLTPQRYLNRLRLMKARHLLRHSEASVTDIAYHCGFSDSNHFSTLFRREFNWSPRDIRQGRDGFLQ.

An HTH araC/xylS-type domain is found at 174–272 (NLLLAWLEDH…NWSPRDIRQG (99 aa)). 2 consecutive DNA-binding regions (H-T-H motif) follow at residues 191-212 (DAVADQFSLSLRTLHRQLKQQT) and 239-262 (VTDIAYHCGFSDSNHFSTLFRREF).

As to quaternary structure, binds DNA as a dimer.

It localises to the cytoplasm. In terms of biological role, activates expression of the rhaBAD and rhaT operons. The protein is HTH-type transcriptional activator RhaS of Escherichia coli O157:H7.